Reading from the N-terminus, the 319-residue chain is Protein MGF 360-8L (319 aa).

Belongs to the asfivirus MGF 360 family.

Its function is as follows. Plays a role in virus cell tropism, and may be required for efficient virus replication in macrophages. The polypeptide is Protein MGF 360-8L (African swine fever virus (isolate Warthog/Namibia/Wart80/1980) (ASFV)).